A 209-amino-acid chain; its full sequence is Outer-membrane lipoprotein carrier protein (209 aa).

A signal peptide spans 1-21; that stretch reads MHRQLRYAVLATALFASTAFA.

Belongs to the LolA family. As to quaternary structure, monomer.

It is found in the periplasm. Participates in the translocation of lipoproteins from the inner membrane to the outer membrane. Only forms a complex with a lipoprotein if the residue after the N-terminal Cys is not an aspartate (The Asp acts as a targeting signal to indicate that the lipoprotein should stay in the inner membrane). In Xanthomonas campestris pv. campestris (strain 8004), this protein is Outer-membrane lipoprotein carrier protein.